The chain runs to 466 residues: Ribulose bisphosphate carboxylase large chain (466 aa).

Lys5 is modified (N6,N6,N6-trimethyllysine). The substrate site is built by Asn114 and Thr164. The Proton acceptor role is filled by Lys166. Lys168 contributes to the substrate binding site. Residues Lys192, Asp194, and Glu195 each contribute to the Mg(2+) site. The residue at position 192 (Lys192) is an N6-carboxylysine. His285 functions as the Proton acceptor in the catalytic mechanism. Substrate contacts are provided by Arg286, His318, and Ser370.

This sequence belongs to the RuBisCO large chain family. Type I subfamily. Heterohexadecamer of 8 large chains and 8 small chains; disulfide-linked. The disulfide link is formed within the large subunit homodimers. The cofactor is Mg(2+). The disulfide bond which can form in the large chain dimeric partners within the hexadecamer appears to be associated with oxidative stress and protein turnover.

It localises to the plastid. The protein localises to the chloroplast. It carries out the reaction 2 (2R)-3-phosphoglycerate + 2 H(+) = D-ribulose 1,5-bisphosphate + CO2 + H2O. The catalysed reaction is D-ribulose 1,5-bisphosphate + O2 = 2-phosphoglycolate + (2R)-3-phosphoglycerate + 2 H(+). Its function is as follows. RuBisCO catalyzes two reactions: the carboxylation of D-ribulose 1,5-bisphosphate, the primary event in carbon dioxide fixation, as well as the oxidative fragmentation of the pentose substrate in the photorespiration process. Both reactions occur simultaneously and in competition at the same active site. The chain is Ribulose bisphosphate carboxylase large chain from Caltha palustris (Yellow marsh marigold).